The sequence spans 482 residues: Long chain base biosynthesis protein 1c (482 aa).

A helical transmembrane segment spans residues Phe-33–Phe-53.

Belongs to the class-II pyridoxal-phosphate-dependent aminotransferase family. Heterodimer with LCB2. Component of the serine palmitoyltransferase (SPT) complex, composed of LCB1 and LCB2. Requires pyridoxal 5'-phosphate as cofactor.

The protein localises to the endoplasmic reticulum membrane. The catalysed reaction is L-serine + hexadecanoyl-CoA + H(+) = 3-oxosphinganine + CO2 + CoA. The protein operates within lipid metabolism; sphingolipid metabolism. In terms of biological role, serine palmitoyltransferase (SPT). The heterodimer formed with LCB2 constitutes the catalytic core. This is Long chain base biosynthesis protein 1c from Oryza sativa subsp. japonica (Rice).